The chain runs to 384 residues: PqqA peptide cyclase (384 aa).

The 217-residue stretch at 15-231 folds into the Radical SAM core domain; that stretch reads PGPPLWLLAE…NQWRDKLAAE (217 aa). Cys-29, Cys-33, and Cys-36 together coordinate [4Fe-4S] cluster.

Belongs to the radical SAM superfamily. PqqE family. Interacts with PqqD. The interaction is necessary for activity of PqqE. The cofactor is [4Fe-4S] cluster.

The enzyme catalyses [PQQ precursor protein] + S-adenosyl-L-methionine = E-Y cross-linked-[PQQ precursor protein] + 5'-deoxyadenosine + L-methionine + H(+). Its pathway is cofactor biosynthesis; pyrroloquinoline quinone biosynthesis. Functionally, catalyzes the cross-linking of a glutamate residue and a tyrosine residue in the PqqA protein as part of the biosynthesis of pyrroloquinoline quinone (PQQ). This Ectopseudomonas mendocina (strain ymp) (Pseudomonas mendocina) protein is PqqA peptide cyclase.